Reading from the N-terminus, the 37-residue chain is Large ribosomal subunit protein bL36 (37 aa).

It belongs to the bacterial ribosomal protein bL36 family.

The polypeptide is Large ribosomal subunit protein bL36 (Solibacter usitatus (strain Ellin6076)).